The sequence spans 768 residues: UPF0313 protein VV1_2212 (768 aa).

The Radical SAM core domain maps to 363–640 (AYDMIKTSVN…LHKALLRYHD (278 aa)). C377, C381, and C384 together coordinate [4Fe-4S] cluster. Positions 674–768 (DARTPAQRRK…GGRNQPSRAR (95 aa)) are disordered. Basic residues predominate over residues 679-689 (AQRRKSGRHGA). Positions 719 to 731 (GGQSNSAPSRSGS) are enriched in polar residues.

Belongs to the UPF0313 family. It depends on [4Fe-4S] cluster as a cofactor.

The sequence is that of UPF0313 protein VV1_2212 from Vibrio vulnificus (strain CMCP6).